The sequence spans 267 residues: Glutamate racemase (267 aa).

Residues 10–11 and 42–43 contribute to the substrate site; these read DS and YG. Cys73 acts as the Proton donor/acceptor in catalysis. 74–75 is a binding site for substrate; the sequence is NT. Cys183 functions as the Proton donor/acceptor in the catalytic mechanism. 184–185 contacts substrate; it reads TH.

Belongs to the aspartate/glutamate racemases family.

The enzyme catalyses L-glutamate = D-glutamate. It functions in the pathway cell wall biogenesis; peptidoglycan biosynthesis. In terms of biological role, provides the (R)-glutamate required for cell wall biosynthesis. The polypeptide is Glutamate racemase (Limosilactobacillus reuteri (strain DSM 20016) (Lactobacillus reuteri)).